The chain runs to 112 residues: DNA-directed RNA polymerase subunit Rpo11 (112 aa).

The protein belongs to the archaeal Rpo11/eukaryotic RPB11/RPC19 RNA polymerase subunit family. Part of the RNA polymerase complex.

Its subcellular location is the cytoplasm. The catalysed reaction is RNA(n) + a ribonucleoside 5'-triphosphate = RNA(n+1) + diphosphate. Its function is as follows. DNA-dependent RNA polymerase (RNAP) catalyzes the transcription of DNA into RNA using the four ribonucleoside triphosphates as substrates. The chain is DNA-directed RNA polymerase subunit Rpo11 from Methanopyrus kandleri (strain AV19 / DSM 6324 / JCM 9639 / NBRC 100938).